The primary structure comprises 187 residues: Putative lipoprotein LppJ (187 aa).

The signal sequence occupies residues Met-1–Gly-28. Cys-29 carries the N-palmitoyl cysteine lipid modification. The S-diacylglycerol cysteine moiety is linked to residue Cys-29.

The protein resides in the cell membrane. The chain is Putative lipoprotein LppJ (lppJ) from Mycobacterium bovis (strain ATCC BAA-935 / AF2122/97).